Reading from the N-terminus, the 147-residue chain is D-aminoacyl-tRNA deacylase (147 aa).

A Gly-cisPro motif, important for rejection of L-amino acids motif is present at residues 137–138 (GP).

This sequence belongs to the DTD family. As to quaternary structure, homodimer.

The protein resides in the cytoplasm. It catalyses the reaction glycyl-tRNA(Ala) + H2O = tRNA(Ala) + glycine + H(+). It carries out the reaction a D-aminoacyl-tRNA + H2O = a tRNA + a D-alpha-amino acid + H(+). Its function is as follows. An aminoacyl-tRNA editing enzyme that deacylates mischarged D-aminoacyl-tRNAs. Also deacylates mischarged glycyl-tRNA(Ala), protecting cells against glycine mischarging by AlaRS. Acts via tRNA-based rather than protein-based catalysis; rejects L-amino acids rather than detecting D-amino acids in the active site. By recycling D-aminoacyl-tRNA to D-amino acids and free tRNA molecules, this enzyme counteracts the toxicity associated with the formation of D-aminoacyl-tRNA entities in vivo and helps enforce protein L-homochirality. The protein is D-aminoacyl-tRNA deacylase of Levilactobacillus brevis (strain ATCC 367 / BCRC 12310 / CIP 105137 / JCM 1170 / LMG 11437 / NCIMB 947 / NCTC 947) (Lactobacillus brevis).